The following is a 190-amino-acid chain: Acireductone dioxygenase (190 aa).

Fe(2+) contacts are provided by His101, His103, Glu107, and His145. Positions 101, 103, 107, and 145 each coordinate Ni(2+).

The protein belongs to the acireductone dioxygenase (ARD) family. As to quaternary structure, monomer. It depends on Fe(2+) as a cofactor. Ni(2+) is required as a cofactor.

It catalyses the reaction 1,2-dihydroxy-5-(methylsulfanyl)pent-1-en-3-one + O2 = 3-(methylsulfanyl)propanoate + CO + formate + 2 H(+). The enzyme catalyses 1,2-dihydroxy-5-(methylsulfanyl)pent-1-en-3-one + O2 = 4-methylsulfanyl-2-oxobutanoate + formate + 2 H(+). It functions in the pathway amino-acid biosynthesis; L-methionine biosynthesis via salvage pathway; L-methionine from S-methyl-5-thio-alpha-D-ribose 1-phosphate: step 5/6. Catalyzes 2 different reactions between oxygen and the acireductone 1,2-dihydroxy-3-keto-5-methylthiopentene (DHK-MTPene) depending upon the metal bound in the active site. Fe-containing acireductone dioxygenase (Fe-ARD) produces formate and 2-keto-4-methylthiobutyrate (KMTB), the alpha-ketoacid precursor of methionine in the methionine recycle pathway. Ni-containing acireductone dioxygenase (Ni-ARD) produces methylthiopropionate, carbon monoxide and formate, and does not lie on the methionine recycle pathway. This Saccharopolyspora erythraea (strain ATCC 11635 / DSM 40517 / JCM 4748 / NBRC 13426 / NCIMB 8594 / NRRL 2338) protein is Acireductone dioxygenase.